A 433-amino-acid chain; its full sequence is MTNAFNTSNSQAVFHAAQELMPGGVSSPVRAFKSVNGDPIVFDRVKGAYAWDLDGNRFIDYVGSWGPAICGHSHPEVIASLQEALEKGTSFGAPCELENKLAEMVIEAVPSVEMVRFVNSGTEACMAVLRLMRAFTGRDKLIKFEGCYHGHADMFLVKAGSGVATLGLPDSPGVPRSTTSNTLTAPYNDLEAVKNLFAENPDAIAGVILEPIVGNAGFIQPEPGFLEGLRELTKENGSLLVFDEVMTGFRISYGGAQGRFGVTPDLTTMGKVIGGGLPVGAYGGRKDIMSMVAPAGPMYQAGTLSGNPLAMTAGIKTLEILQQEGTYERLASITNRLINGICESAKQAGIPITGSSISGMFGFYLCEGPVRNFEEAKQTNSDYFGKLHRAMLAKGVYLAPSAFEAGFTSLAHSEEDIDSTLKAFNECFNELSQ.

Lysine 271 is modified (N6-(pyridoxal phosphate)lysine).

It belongs to the class-III pyridoxal-phosphate-dependent aminotransferase family. HemL subfamily. As to quaternary structure, homodimer. It depends on pyridoxal 5'-phosphate as a cofactor.

The protein localises to the cytoplasm. The catalysed reaction is (S)-4-amino-5-oxopentanoate = 5-aminolevulinate. It functions in the pathway porphyrin-containing compound metabolism; protoporphyrin-IX biosynthesis; 5-aminolevulinate from L-glutamyl-tRNA(Glu): step 2/2. The protein operates within porphyrin-containing compound metabolism; chlorophyll biosynthesis. This chain is Glutamate-1-semialdehyde 2,1-aminomutase, found in Prochlorococcus marinus (strain SARG / CCMP1375 / SS120).